The chain runs to 331 residues: Centriolar satellite-associated tubulin polyglutamylase complex regulator 1 (331 aa).

The interval 1–111 (MLSPERLALP…HCLLQLLCPD (111 aa)) is required for interaction with PCM1. The tract at residues 1-225 (MLSPERLALP…SCPPPALVKE (225 aa)) is required for interaction with TPGS1, LRRC49, and TTLL1. Residues 112-331 (FPLELTQKAA…STEETDESET (220 aa)) form a required for interaction with TPGS2 region. Residues 292–331 (SCLPSRTPPRVGSPWKPLHRSRKLDAESDGSTEETDESET) form a disordered region. Acidic residues predominate over residues 318–331 (ESDGSTEETDESET). At Ser-319 the chain carries Phosphoserine.

Belongs to the CSTPP1 family. As to quaternary structure, interacts with PCM1. Interacts with TTLL1, TPGS1, TPGS2 and LRRC49; the interactions link CSTPP1 to the complex TPGC. Binds to alpha-tubulin.

It localises to the cytoplasm. Its subcellular location is the cytoskeleton. The protein resides in the microtubule organizing center. It is found in the centrosome. The protein localises to the centriolar satellite. Functionally, regulator of the tubulin polyglutamylase complex (TPGC) that controls cytoskeletal organization, nuclear shape, and cilium disassembly by balancing microtubule and actin assembly. Regulates the assembly and stability of the TPGC and thereby modulates polyglutamylation of the microtubule, which antagonizes MAP4 binding. This chain is Centriolar satellite-associated tubulin polyglutamylase complex regulator 1, found in Mus musculus (Mouse).